The following is a 403-amino-acid chain: Phosphopentomutase (403 aa).

Mn(2+)-binding residues include D13, D298, H303, D339, H340, and H351.

The protein belongs to the phosphopentomutase family. Requires Mn(2+) as cofactor.

The protein localises to the cytoplasm. It catalyses the reaction 2-deoxy-alpha-D-ribose 1-phosphate = 2-deoxy-D-ribose 5-phosphate. The enzyme catalyses alpha-D-ribose 1-phosphate = D-ribose 5-phosphate. The protein operates within carbohydrate degradation; 2-deoxy-D-ribose 1-phosphate degradation; D-glyceraldehyde 3-phosphate and acetaldehyde from 2-deoxy-alpha-D-ribose 1-phosphate: step 1/2. Isomerase that catalyzes the conversion of deoxy-ribose 1-phosphate (dRib-1-P) and ribose 1-phosphate (Rib-1-P) to deoxy-ribose 5-phosphate (dRib-5-P) and ribose 5-phosphate (Rib-5-P), respectively. The chain is Phosphopentomutase from Streptococcus uberis (strain ATCC BAA-854 / 0140J).